A 450-amino-acid polypeptide reads, in one-letter code: Tryptophan dimethylallyltransferase 2 (450 aa).

Residues 80–81 (IL) and Glu89 each bind L-tryptophan. Residues Arg100, Lys186, and Tyr188 each coordinate substrate. Residues Tyr190 and Arg251 each contribute to the L-tryptophan site. Residues Arg264, Lys266, Tyr268, Gln350, Tyr352, Tyr416, and Tyr420 each coordinate substrate.

The protein belongs to the tryptophan dimethylallyltransferase family. In terms of assembly, homodimer.

The catalysed reaction is L-tryptophan + dimethylallyl diphosphate = 4-(3-methylbut-2-enyl)-L-tryptophan + diphosphate. The protein operates within alkaloid biosynthesis; ergot alkaloid biosynthesis. Functionally, catalyzes the first step of ergot alkaloid biosynthesis. Ergot alkaloids, which are produced by endophyte fungi, can enhance plant host fitness, but also cause livestock toxicosis to host plants. The protein is Tryptophan dimethylallyltransferase 2 (dmaW2) of Epichloe coenophiala (Tall fescue endophyte fungus).